Consider the following 772-residue polypeptide: A type blood N-acetyl-alpha-D-galactosamine deacetylase (772 aa).

Residues 1–27 form the signal peptide; the sequence is MRNRRKAVSLLTGLLVTAQLFPTAALA. Residues S87 and H123 each coordinate substrate. D126 provides a ligand contact to a divalent metal cation. The segment at 180–402 is deacetylase activity; sequence WSKPTSDAER…WRIGYAENSF (223 aa). Y236 provides a ligand contact to substrate. H278 is an a divalent metal cation binding site. In terms of domain architecture, F5/8 type C spans 494–605; that stretch reads SDDLEIAVVE…KDLVASGSDW (112 aa). Positions 502–765 are CBM32 carbohydrate-binding domain; sequence VENPYTLIPQ…VCVSPVVDFD (264 aa). A not required for activity on soluble substrates region spans residues 515-772; that stretch reads TATATSVYGG…DFDYFSYVGE (258 aa).

It depends on a divalent metal cation as a cofactor.

It catalyses the reaction an N-acetyl-alpha-D-galactosaminyl-(1-&gt;3)-[alpha-L-fucosyl-(1-&gt;2)]-beta-D-galactosyl derivative + H2O = an alpha-D-galactosaminyl-(1-&gt;3)-[alpha-L-fucosyl-(1-&gt;2)]-beta-D-galactosyl derivative + acetate. With respect to regulation, inhibited by EDTA. In terms of biological role, one of an enzyme pair that work together to convert the A antigen to the H antigen of the O blood type, which together release galactosamine. Catalyzes the first step in the conversion, generating the substrate for the subsequent enzyme (FpGalNase, AC P0DTR5). Works on many different A antigen subtypes. Glu-90 probably activates a nucleophilic water molecule to start the deacetylation reaction. The sequence is that of A type blood N-acetyl-alpha-D-galactosamine deacetylase from Flavonifractor plautii (Fusobacterium plautii).